Consider the following 450-residue polypeptide: Probable glycylpeptide N-tetradecanoyltransferase (450 aa).

Residues 1–28 (MSHGHSHDGAPCGGHHGDDGAGGSRPSV) are disordered. Tetradecanoyl-CoA-binding residues include glutamine 67, phenylalanine 68, tryptophan 69, phenylalanine 200, leucine 201, cysteine 202, valine 203, serine 209, arginine 211, valine 212, and alanine 213.

It belongs to the NMT family.

The protein localises to the cytoplasm. The enzyme catalyses N-terminal glycyl-[protein] + tetradecanoyl-CoA = N-tetradecanoylglycyl-[protein] + CoA + H(+). Adds a myristoyl group to the N-terminal glycine residue of certain cellular proteins. The protein is Probable glycylpeptide N-tetradecanoyltransferase (nmt-1) of Caenorhabditis elegans.